Here is a 129-residue protein sequence, read N- to C-terminus: Phosphoribosyl-AMP cyclohydrolase (129 aa).

A Mg(2+)-binding site is contributed by Asp-76. Cys-77 lines the Zn(2+) pocket. Positions 78 and 80 each coordinate Mg(2+). Cys-97 and Cys-104 together coordinate Zn(2+).

This sequence belongs to the PRA-CH family. As to quaternary structure, homodimer. Mg(2+) is required as a cofactor. Requires Zn(2+) as cofactor.

The protein localises to the cytoplasm. It catalyses the reaction 1-(5-phospho-beta-D-ribosyl)-5'-AMP + H2O = 1-(5-phospho-beta-D-ribosyl)-5-[(5-phospho-beta-D-ribosylamino)methylideneamino]imidazole-4-carboxamide. It participates in amino-acid biosynthesis; L-histidine biosynthesis; L-histidine from 5-phospho-alpha-D-ribose 1-diphosphate: step 3/9. Its function is as follows. Catalyzes the hydrolysis of the adenine ring of phosphoribosyl-AMP. The polypeptide is Phosphoribosyl-AMP cyclohydrolase (Methylibium petroleiphilum (strain ATCC BAA-1232 / LMG 22953 / PM1)).